A 323-amino-acid chain; its full sequence is Di/tripeptide transport ATP-binding protein DppF (323 aa).

The 250-residue stretch at 5–254 folds into the ABC transporter domain; sequence LTARDLTRHY…PLHPYTRALL (250 aa). Residue 47 to 54 participates in ATP binding; it reads GESGCGKS.

The protein belongs to the ABC transporter superfamily. As to quaternary structure, the complex is composed of two ATP-binding proteins (DppD and DppF), two transmembrane proteins (DppB and DppC) and a solute-binding protein (DppA1-A5). Five orthologous SBPs (DppA1-A5) are present in P.aeruginosa, which increases the substrate specificity of the DppBCDF transporter.

It is found in the cell inner membrane. It carries out the reaction a dipeptide(out) + ATP + H2O = a dipeptide(in) + ADP + phosphate + H(+). Part of the ABC transporter DppABCDF involved in the uptake of various di/tripeptides. Is also involved in the uptake of phaseolotoxin, a toxic tripeptide inhibiting the enzyme ornithine carbamoyltransferase. Responsible for energy coupling to the transport system. This chain is Di/tripeptide transport ATP-binding protein DppF, found in Pseudomonas aeruginosa (strain UCBPP-PA14).